The chain runs to 397 residues: MAAPDPYKPGKYNDPAGGVESSIGPQTQTQYWMKQALIDARKEAYFGQLASVFGMPKHYGKKIVRMHYIPLLDDRNINDQGIDASGATIANGNLYGSSRDVGTIVGKMPTLTEVGGRVNRVGFKRVLLEGKLEKYGFFREYTQESLDFDSDAELDMHVGREMLKGANEMTEDLLQIDLLNSAGVVRYPGAATQDSEVDATTEVTYDSLMRLNIDLDNNRAPKGTKMITGTRMIDTRTIPGCRPLYCGSELIPTLKAMKDNHGNPAFISIEKYAAGGNTFIGEIGAIDQFRIIINPQMMHWQGAGKAVDPAADGYHDFNDKYSIFPMLVISSEAFTTVGFQTDGKNVKFKIYNKKPGEATADRLDPYGEMGFMSIKWYYGFMVYRPEWIALIKTVARL.

Residues 1 to 24 (MAAPDPYKPGKYNDPAGGVESSIG) form a disordered region.

It localises to the virion. Assembles to form an icosahedral capsid. This is Major capsid protein from Pseudomonas phage KPP21.